A 348-amino-acid chain; its full sequence is Ephrin-4 (348 aa).

An N-terminal signal peptide occupies residues 1–20; that stretch reads MKQFFEFLITTFLLLGLAAA. Residues 21–178 form the Ephrin RBD domain; that stretch reads DEHIVYWNST…SQNMRLSMKV (158 aa). N-linked (GlcNAc...) asparagine glycosylation is present at asparagine 28. Disulfide bonds link cysteine 53–cysteine 91 and cysteine 79–cysteine 167. An N-linked (GlcNAc...) asparagine glycan is attached at asparagine 157. Residues 207–237 form a disordered region; it reads GGQEDEDSDNDNAHLLPRDLEGSTNPKFRRP. A lipid anchor (GPI-anchor amidated serine) is attached at serine 329. Residues 330–348 constitute a propeptide, removed in mature form; that stretch reads STSLSTNFAILLAVIYVLY.

This sequence belongs to the ephrin family. Interacts with lat-2. May undergo proteolysis by metalloprotease sup-17 to give rise to a soluble form.

The protein resides in the cell membrane. Its function is as follows. Regulates the formation or stabilization of cell-cell contacts at several stages of epithelial morphogenesis. In early embryonic development, involved in ventral closure of the epidermis. During male tail morphogenesis, regulates precursor cell sorting together with mab-20 and allows the formation of distinct sensory rays. Probably acts as a ligand for lad-2 to regulate axon guidance of several neurons including SDQL, SDQR, SMD and PLN neurons during neurogenesis. This is Ephrin-4 (efn-4) from Caenorhabditis elegans.